The primary structure comprises 332 residues: Holliday junction branch migration complex subunit RuvB (332 aa).

The large ATPase domain (RuvB-L) stretch occupies residues Met1–Tyr181. Residues Leu20, Arg21, Gly62, Lys65, Thr66, Thr67, Glu128–Phe130, Arg171, Tyr181, and Arg218 each bind ATP. Thr66 serves as a coordination point for Mg(2+). Residues Ala182–Asp252 form a small ATPAse domain (RuvB-S) region. The interval His255–Lys332 is head domain (RuvB-H). DNA is bound by residues Arg291, Arg310, Arg312, and Arg315.

The protein belongs to the RuvB family. As to quaternary structure, homohexamer. Forms an RuvA(8)-RuvB(12)-Holliday junction (HJ) complex. HJ DNA is sandwiched between 2 RuvA tetramers; dsDNA enters through RuvA and exits via RuvB. An RuvB hexamer assembles on each DNA strand where it exits the tetramer. Each RuvB hexamer is contacted by two RuvA subunits (via domain III) on 2 adjacent RuvB subunits; this complex drives branch migration. In the full resolvosome a probable DNA-RuvA(4)-RuvB(12)-RuvC(2) complex forms which resolves the HJ.

The protein resides in the cytoplasm. It catalyses the reaction ATP + H2O = ADP + phosphate + H(+). In terms of biological role, the RuvA-RuvB-RuvC complex processes Holliday junction (HJ) DNA during genetic recombination and DNA repair, while the RuvA-RuvB complex plays an important role in the rescue of blocked DNA replication forks via replication fork reversal (RFR). RuvA specifically binds to HJ cruciform DNA, conferring on it an open structure. The RuvB hexamer acts as an ATP-dependent pump, pulling dsDNA into and through the RuvAB complex. RuvB forms 2 homohexamers on either side of HJ DNA bound by 1 or 2 RuvA tetramers; 4 subunits per hexamer contact DNA at a time. Coordinated motions by a converter formed by DNA-disengaged RuvB subunits stimulates ATP hydrolysis and nucleotide exchange. Immobilization of the converter enables RuvB to convert the ATP-contained energy into a lever motion, pulling 2 nucleotides of DNA out of the RuvA tetramer per ATP hydrolyzed, thus driving DNA branch migration. The RuvB motors rotate together with the DNA substrate, which together with the progressing nucleotide cycle form the mechanistic basis for DNA recombination by continuous HJ branch migration. Branch migration allows RuvC to scan DNA until it finds its consensus sequence, where it cleaves and resolves cruciform DNA. The chain is Holliday junction branch migration complex subunit RuvB from Streptococcus pneumoniae serotype 4 (strain ATCC BAA-334 / TIGR4).